A 526-amino-acid polypeptide reads, in one-letter code: Nucleobase-ascorbate transporter 4 (526 aa).

The next 12 helical transmembrane spans lie at 42-62, 69-89, 91-111, 131-151, 157-177, 186-206, 217-237, 282-302, 359-381, 388-410, 420-440, and 457-477; these read IVML…MGGG, VINT…LFGS, LPVV…ITFS, IQGA…FGLW, FLSP…LLAF, IEIG…LPHL, FAVL…TAAG, AFAM…SFIA, RVVQ…GAVL, IFAA…LLQF, FILG…TEYL, and VIMQ…AFLL.

Belongs to the nucleobase:cation symporter-2 (NCS2) (TC 2.A.40) family. As to expression, highly expressed in the root central cylinder. Expressed in the filaments and stigmatic papillae of pollinated flowers and developing siliques.

Its subcellular location is the membrane. The protein is Nucleobase-ascorbate transporter 4 (NAT4) of Arabidopsis thaliana (Mouse-ear cress).